The following is a 268-amino-acid chain: Tetraspanin-5 (268 aa).

Residues 1–17 lie on the Cytoplasmic side of the membrane; the sequence is MSGKHYKGPEVSCCIKY. Residues 18 to 38 traverse the membrane as a helical segment; the sequence is FIFGFNVIFWFLGIAFLGIGL. The Extracellular portion of the chain corresponds to 39–61; the sequence is WAWNEKGVLSNISSITDLGGFDP. N-linked (GlcNAc...) asparagine glycosylation occurs at asparagine 49. The helical transmembrane segment at 62-82 threads the bilayer; the sequence is VWLFLVVGGVMFILGFAGCIG. Residues 83-92 are Cytoplasmic-facing; it reads ALRENTFLLK. A helical membrane pass occupies residues 93 to 113; that stretch reads FFSVFLGIIFFLELTAGVLAF. Over 114–232 the chain is Extracellular; that stretch reads VFKDWIKDQL…PQFEKWLQDN (119 aa). 4 disulfides stabilise this stretch: cysteine 153/cysteine 221, cysteine 154/cysteine 186, cysteine 170/cysteine 180, and cysteine 187/cysteine 200. 2 N-linked (GlcNAc...) asparagine glycosylation sites follow: asparagine 169 and asparagine 174. An N-linked (GlcNAc...) asparagine glycan is attached at asparagine 232. Residues 233–253 form a helical membrane-spanning segment; the sequence is LTIVAGIFIGIALLQIFGICL. Residues 254–268 lie on the Cytoplasmic side of the membrane; that stretch reads AQNLVSDIEAVRASW.

This sequence belongs to the tetraspanin (TM4SF) family. As to quaternary structure, interacts with ADAM10; the interaction influences ADAM10 substrate specificity, endocytosis and turnover. Post-translationally, palmitoylated.

The protein resides in the cell membrane. Part of TspanC8 subgroup, composed of 6 members that interact with the transmembrane metalloprotease ADAM10. This interaction is required for ADAM10 exit from the endoplasmic reticulum and for enzymatic maturation and trafficking to the cell surface as well as substrate specificity. Different TspanC8/ADAM10 complexes have distinct substrates. Promotes ADAM10-mediated cleavage of CD44. Seems to regulate VE-cadherin expression in endothelial cells probably through interaction with ADAM10, promoting leukocyte transmigration. The protein is Tetraspanin-5 (TSPAN5) of Bos taurus (Bovine).